The chain runs to 410 residues: Chitin deacetylase 3 (410 aa).

Positions 1-18 (MYGHLSLSTLSLLAVVAA) are cleaved as a signal peptide. Positions 19–39 (APFHESWLQPRDSDVSQLFRR) are excised as a propeptide. N-linked (GlcNAc...) asparagine glycans are attached at residues asparagine 61 and asparagine 80. Residues 124–314 (KVWALSFDDG…KAVANGWSVK (191 aa)) form the NodB homology domain. Aspartate 131 serves as the catalytic Proton acceptor. Aspartate 131 provides a ligand contact to acetate. Aspartate 132 is a Co(2+) binding site. A glycan (N-linked (GlcNAc...) asparagine) is linked at asparagine 149. Histidine 183 and histidine 187 together coordinate Co(2+). Tyrosine 225 contacts acetate. N-linked (GlcNAc...) asparagine glycosylation is present at asparagine 279. Histidine 289 acts as the Proton donor in catalysis. Asparagine 293 carries N-linked (GlcNAc...) asparagine glycosylation. A lipid anchor (GPI-anchor amidated serine) is attached at serine 385. A propeptide spans 386–410 (SSWPIANRPSLFVIACGLALAAIMV) (removed in mature form).

Belongs to the polysaccharide deacetylase family. Co(2+) serves as cofactor.

It is found in the cell membrane. It catalyses the reaction [(1-&gt;4)-N-acetyl-beta-D-glucosaminyl](n) + n H2O = chitosan + n acetate. In terms of biological role, hydrolyzes the N-acetamido groups of N-acetyl-D-glucosamine residues in chitin to form chitosan and acetate. Chitosan is required to anchor melanin to the cell wall, for maintenance of cell wall integrity, and for proper cytokinesis. Chitosan offers an advantage during infection as it is less readily detected than chitin by host immunosurveillance mechanisms. The polypeptide is Chitin deacetylase 3 (Cryptococcus neoformans var. neoformans serotype D (strain B-3501A) (Filobasidiella neoformans)).